The primary structure comprises 615 residues: Zinc metalloproteinase R519 (615 aa).

The Peptidase M13 domain maps to 1-611 (MTYRSCIPQN…LDPQLRSRIL (611 aa)). H454 contacts Zn(2+). E455 is an active-site residue. Positions 458 and 513 each coordinate Zn(2+). D517 (proton donor) is an active-site residue.

It belongs to the peptidase M13 family. Requires Zn(2+) as cofactor.

Its function is as follows. Zinc metalloprotease. This Acanthamoeba polyphaga (Amoeba) protein is Zinc metalloproteinase R519.